A 303-amino-acid chain; its full sequence is MEIFCICLLLDPIWIFGDTLILKDGRKMGNVRTSLREDHVLVEDETGKVEKIDLTLVEKILVSEIKKPEGEEKQKEHNNIKKFYFSWNLSSWSTKVTEKMNFNRGYNITDLITGVIYIDPYIEKRYTVNTKTTSFNGEYRYNLNLSFLFGIELNSYSFPDRKISPLVGILMNSNFNSTPEYQTLSSISINLFLFEGNFNFDKQGNDKFGIETLSLLPGMKYYFPLSESIFWFTQVGLGVGKSIESGVHSKVQTVLFVGTGIQWELESYFFNIALQYRKTDLIGATQSYHFNEPIFMIGGGLKL.

This is an uncharacterized protein from Leptospira interrogans.